A 400-amino-acid chain; its full sequence is NADH-quinone oxidoreductase subunit D (400 aa).

This sequence belongs to the complex I 49 kDa subunit family. In terms of assembly, NDH-1 is composed of 14 different subunits. Subunits NuoB, C, D, E, F, and G constitute the peripheral sector of the complex.

It localises to the cell inner membrane. It carries out the reaction a quinone + NADH + 5 H(+)(in) = a quinol + NAD(+) + 4 H(+)(out). Its function is as follows. NDH-1 shuttles electrons from NADH, via FMN and iron-sulfur (Fe-S) centers, to quinones in the respiratory chain. The immediate electron acceptor for the enzyme in this species is believed to be ubiquinone. Couples the redox reaction to proton translocation (for every two electrons transferred, four hydrogen ions are translocated across the cytoplasmic membrane), and thus conserves the redox energy in a proton gradient. In Granulibacter bethesdensis (strain ATCC BAA-1260 / CGDNIH1), this protein is NADH-quinone oxidoreductase subunit D.